Here is a 486-residue protein sequence, read N- to C-terminus: 2-hydroxymuconic semialdehyde dehydrogenase (486 aa).

Residues Glu254 and Cys288 contribute to the active site.

The protein belongs to the aldehyde dehydrogenase family. Homodimer.

The enzyme catalyses (2Z,4E)-2-hydroxy-6-oxohexa-2,4-dienoate + NAD(+) + H2O = (2Z,4E)-2-hydroxyhexa-2,4-dienedioate + NADH + 2 H(+). The protein operates within aromatic compound metabolism; benzoate degradation via hydroxylation. 2-hydroxymuconic acid semialdehyde can be converted to 2-hydroxypent-2,4-dienoate either directly by the action of 2-hydroxymuconic semialdehyde hydrolase (HMSH) or by the action of three sequential enzymes, the first of which is HMSD. Can oxidize not only 2-hydroxymuconic semialdehyde and its analogs but also benzaldehyde and its analogs. The sequence is that of 2-hydroxymuconic semialdehyde dehydrogenase (xylG) from Pseudomonas putida (Arthrobacter siderocapsulatus).